Consider the following 160-residue polypeptide: Sperm acrosome-associated protein 5 (160 aa).

A signal peptide spans 1–21 (MKVCSIVVVILAVLLIAKLDA). The 129-residue stretch at 22-150 (KIYERCELAK…SEWLKGCSVR (129 aa)) folds into the C-type lysozyme domain. 4 disulfides stabilise this stretch: Cys27-Cys147, Cys51-Cys135, Cys85-Cys100, and Cys96-Cys114. Glu56 is an active-site residue.

Belongs to the glycosyl hydrolase 22 family.

It localises to the secreted. It catalyses the reaction Hydrolysis of (1-&gt;4)-beta-linkages between N-acetylmuramic acid and N-acetyl-D-glucosamine residues in a peptidoglycan and between N-acetyl-D-glucosamine residues in chitodextrins.. The chain is Sperm acrosome-associated protein 5 (Spaca5) from Mus musculus (Mouse).